The sequence spans 130 residues: Small ribosomal subunit protein uS11 (130 aa).

Belongs to the universal ribosomal protein uS11 family. In terms of assembly, part of the 30S ribosomal subunit. Interacts with proteins S7 and S18. Binds to IF-3.

Functionally, located on the platform of the 30S subunit, it bridges several disparate RNA helices of the 16S rRNA. Forms part of the Shine-Dalgarno cleft in the 70S ribosome. The chain is Small ribosomal subunit protein uS11 from Kosmotoga olearia (strain ATCC BAA-1733 / DSM 21960 / TBF 19.5.1).